Consider the following 129-residue polypeptide: Small ribosomal subunit protein uS11 (129 aa).

This sequence belongs to the universal ribosomal protein uS11 family. Part of the 30S ribosomal subunit. Interacts with proteins S7 and S18. Binds to IF-3.

Functionally, located on the platform of the 30S subunit, it bridges several disparate RNA helices of the 16S rRNA. Forms part of the Shine-Dalgarno cleft in the 70S ribosome. The protein is Small ribosomal subunit protein uS11 of Nitrosospira multiformis (strain ATCC 25196 / NCIMB 11849 / C 71).